We begin with the raw amino-acid sequence, 95 residues long: Small ribosomal subunit protein uS19 (95 aa).

The segment at 76-95 (PTRRFGGHADKKAKKGELKK) is disordered. Residues 82–95 (GHADKKAKKGELKK) are compositionally biased toward basic and acidic residues.

This sequence belongs to the universal ribosomal protein uS19 family.

Its function is as follows. Protein S19 forms a complex with S13 that binds strongly to the 16S ribosomal RNA. The chain is Small ribosomal subunit protein uS19 (rpsS) from Thermotoga maritima (strain ATCC 43589 / DSM 3109 / JCM 10099 / NBRC 100826 / MSB8).